Reading from the N-terminus, the 197-residue chain is MIVGLTGGIASGKTLCCNWFAAQGCYIIDADLIAKELVTVGGVVWLQLRAHFGETIFYADGNLNRALLREKMFHNQEIKEKVNQIFHPAVRAEIEKRIHLYPHAFTLLDVPLLFETQLHKICHMVIVVDIPVSLQIARGVCRDGVNSAQMQRIIASQISREKRLSLANFIIDNSNSIAQTYQQCQQIYQQILSLNAA.

In terms of domain architecture, DPCK spans 2–197 (IVGLTGGIAS…YQQILSLNAA (196 aa)). Residue 10 to 15 (ASGKTL) participates in ATP binding.

Belongs to the CoaE family.

The protein resides in the cytoplasm. The catalysed reaction is 3'-dephospho-CoA + ATP = ADP + CoA + H(+). It functions in the pathway cofactor biosynthesis; coenzyme A biosynthesis; CoA from (R)-pantothenate: step 5/5. In terms of biological role, catalyzes the phosphorylation of the 3'-hydroxyl group of dephosphocoenzyme A to form coenzyme A. This Dichelobacter nodosus (Bacteroides nodosus) protein is Dephospho-CoA kinase.